We begin with the raw amino-acid sequence, 362 residues long: Probable dual-specificity RNA methyltransferase RlmN (362 aa).

The active-site Proton acceptor is E91. The region spanning 97–329 (QHYGLSVCVT…KKNGVNCVVR (233 aa)) is the Radical SAM core domain. A disulfide bridge connects residues C104 and C340. C111, C115, and C118 together coordinate [4Fe-4S] cluster. S-adenosyl-L-methionine contacts are provided by residues 163-164 (GE), S195, 218-220 (SLH), and N296. The active-site S-methylcysteine intermediate is C340.

This sequence belongs to the radical SAM superfamily. RlmN family. It depends on [4Fe-4S] cluster as a cofactor.

The protein localises to the cytoplasm. It carries out the reaction adenosine(2503) in 23S rRNA + 2 reduced [2Fe-2S]-[ferredoxin] + 2 S-adenosyl-L-methionine = 2-methyladenosine(2503) in 23S rRNA + 5'-deoxyadenosine + L-methionine + 2 oxidized [2Fe-2S]-[ferredoxin] + S-adenosyl-L-homocysteine. The enzyme catalyses adenosine(37) in tRNA + 2 reduced [2Fe-2S]-[ferredoxin] + 2 S-adenosyl-L-methionine = 2-methyladenosine(37) in tRNA + 5'-deoxyadenosine + L-methionine + 2 oxidized [2Fe-2S]-[ferredoxin] + S-adenosyl-L-homocysteine. Functionally, specifically methylates position 2 of adenine 2503 in 23S rRNA and position 2 of adenine 37 in tRNAs. The protein is Probable dual-specificity RNA methyltransferase RlmN of Streptococcus sanguinis (strain SK36).